A 135-amino-acid polypeptide reads, in one-letter code: Small ribosomal subunit protein bS16 (135 aa).

Residues 94–135 are disordered; that stretch reads IGTEMETWQQRNDSRLKRGLDRKAIRRKRKKEAEAKEKESAG. Composition is skewed to basic and acidic residues over residues 105–116 and 124–135; these read NDSRLKRGLDRK and KEAEAKEKESAG.

This sequence belongs to the bacterial ribosomal protein bS16 family.

This Chloroherpeton thalassium (strain ATCC 35110 / GB-78) protein is Small ribosomal subunit protein bS16.